The following is a 163-amino-acid chain: uncharacterized protein (163 aa).

The interval 1-54 is disordered; sequence MGKSARLRRSQTSSPENVLLGKDSSDDPYRSDSETESNSSSGTESNMSSDSTTS. Basic and acidic residues predominate over residues 23–33; the sequence is DSSDDPYRSDS. Residues 36 to 52 show a composition bias toward low complexity; sequence ESNSSSGTESNMSSDST. A coiled-coil region spans residues 69-143; it reads LRTELAEMEM…VEELESSTRE (75 aa).

This is an uncharacterized protein from Arabidopsis thaliana (Mouse-ear cress).